Consider the following 97-residue polypeptide: Large ribosomal subunit protein uL23 (97 aa).

It belongs to the universal ribosomal protein uL23 family. As to quaternary structure, part of the 50S ribosomal subunit. Contacts protein L29, and trigger factor when it is bound to the ribosome.

Its function is as follows. One of the early assembly proteins it binds 23S rRNA. One of the proteins that surrounds the polypeptide exit tunnel on the outside of the ribosome. Forms the main docking site for trigger factor binding to the ribosome. The protein is Large ribosomal subunit protein uL23 of Rhizobium rhizogenes (strain K84 / ATCC BAA-868) (Agrobacterium radiobacter).